A 344-amino-acid chain; its full sequence is Probable Delta(7)-sterol 5(6)-desaturase (344 aa).

Transmembrane regions (helical) follow at residues Leu-76–Leu-96, Gln-123–Val-143, and Trp-160–Ile-180. The Fatty acid hydroxylase domain occupies Pro-167–Gly-292. Residues His-181–His-185 carry the Histidine box-1 motif. Positions His-194–His-198 match the Histidine box-2 motif. A helical transmembrane segment spans residues His-224–Ile-244. The Histidine box-3 signature appears at His-269–His-273.

The protein belongs to the sterol desaturase family. Fe cation is required as a cofactor.

The protein resides in the endoplasmic reticulum membrane. It carries out the reaction a Delta(7)-sterol + 2 Fe(II)-[cytochrome b5] + O2 + 2 H(+) = a Delta(5),Delta(7)-sterol + 2 Fe(III)-[cytochrome b5] + 2 H2O. Its pathway is steroid metabolism; ergosterol biosynthesis; ergosterol from zymosterol: step 3/5. Functionally, catalyzes the introduction of a C-5 double bond in the B ring of ergosterol. May contribute to the regulation of ergosterol biosynthesis. In Neurospora crassa (strain ATCC 24698 / 74-OR23-1A / CBS 708.71 / DSM 1257 / FGSC 987), this protein is Probable Delta(7)-sterol 5(6)-desaturase.